Consider the following 643-residue polypeptide: Zinc finger protein 64 (643 aa).

11 C2H2-type zinc fingers span residues 173–195, 201–223, 229–251, 297–322, 328–350, 356–378, 384–406, 412–434, 440–463, 465–487, and 493–515; these read HKCE…MRCH, YKCK…LRIH, FKCQ…LRSH, FNCR…LRIH, HKCH…LRIH, YKCQ…LRSH, FQCW…MIVH, FKCE…RIKH, FKCL…SRLH, and EKCP…SRVH. Zn(2+)-binding residues include Cys495, Cys498, His511, His515, Cys523, Cys526, His539, and His544. Basic and acidic residues predominate over residues 538–552; that stretch reads KHIDKVHREGAKTEN. Residues 538-571 are disordered; sequence KHIDKVHREGAKTENRAPPGKDGPGESGPHHVPN. A C2H2-type 12 zinc finger spans residues 578–600; it reads FGCDKCGASFVRDDSLRCHRKQH.

This sequence belongs to the krueppel C2H2-type zinc-finger protein family. Interacts with NOTCH1. Widely expressed. Expressed in the brain, spleen, liver, and heart.

The protein resides in the nucleus. In terms of biological role, may be involved in the regulation of mesenchymal cell differentiation through transactivation of NOTCH1 target genes. This chain is Zinc finger protein 64, found in Mus musculus (Mouse).